The chain runs to 250 residues: Putative (5-formylfuran-3-yl)methyl phosphate synthase (250 aa).

Lys29 (schiff-base intermediate with substrate) is an active-site residue. The active-site Proton acceptor is the Lys87.

This sequence belongs to the MfnB family.

The catalysed reaction is 2 D-glyceraldehyde 3-phosphate = 4-(hydroxymethyl)-2-furancarboxaldehyde phosphate + phosphate + 2 H2O. In terms of biological role, catalyzes the formation of 4-(hydroxymethyl)-2-furancarboxaldehyde phosphate (4-HFC-P) from two molecules of glyceraldehyde-3-P (GA-3-P). This Streptomyces griseus subsp. griseus (strain JCM 4626 / CBS 651.72 / NBRC 13350 / KCC S-0626 / ISP 5235) protein is Putative (5-formylfuran-3-yl)methyl phosphate synthase.